Reading from the N-terminus, the 334-residue chain is Eukaryotic translation initiation factor 3 subunit H (334 aa).

The 133-residue stretch at 20 to 152 (VQCDGLAAMK…LKAYRLTPQA (133 aa)) folds into the MPN domain.

This sequence belongs to the eIF-3 subunit H family. Component of the eukaryotic translation initiation factor 3 (eIF-3) complex.

It localises to the cytoplasm. In terms of biological role, component of the eukaryotic translation initiation factor 3 (eIF-3) complex, which is involved in protein synthesis of a specialized repertoire of mRNAs and, together with other initiation factors, stimulates binding of mRNA and methionyl-tRNAi to the 40S ribosome. The eIF-3 complex specifically targets and initiates translation of a subset of mRNAs involved in cell proliferation. The protein is Eukaryotic translation initiation factor 3 subunit H of Anopheles gambiae (African malaria mosquito).